We begin with the raw amino-acid sequence, 187 residues long: Elongation factor P (187 aa).

This sequence belongs to the elongation factor P family.

The protein localises to the cytoplasm. The protein operates within protein biosynthesis; polypeptide chain elongation. Functionally, involved in peptide bond synthesis. Stimulates efficient translation and peptide-bond synthesis on native or reconstituted 70S ribosomes in vitro. Probably functions indirectly by altering the affinity of the ribosome for aminoacyl-tRNA, thus increasing their reactivity as acceptors for peptidyl transferase. The polypeptide is Elongation factor P (Clavibacter michiganensis subsp. michiganensis (strain NCPPB 382)).